A 348-amino-acid polypeptide reads, in one-letter code: MNPVVLTIIISSLGLGTMMTFIGSHWLLVWMGLEINTLAIIPLMIRQHHPRAVEATTKYFLTQATASALLLFASITNAWSLGEWSLLEMLNPTSATLVTIALALKIGLAPMHFWLPEVLQGLDLITGLILATWQKLAPFAILLQLHPMLNSNLLLFLGVSSTVIGGWGGLNQTQLRKILAYSSIAHLGWMITILHYSPNLTQLNLALYIIMTLTTFLLFKLFNSTKINSIAISTIKSPLLSIIALITLLSLGGLPPLSGFMPKWLILQELTKQDLAIPATIMALAALLSLFFYLRLCYSTTLTMSPNSIYLSSSWRTKSLQPNLILMMATSLSILLLPLTPTIFMLTL.

The next 11 membrane-spanning stretches (helical) occupy residues 3 to 23, 25 to 45, 67 to 87, 95 to 115, 118 to 138, 149 to 171, 178 to 198, 203 to 223, 240 to 260, 274 to 294, and 324 to 344; these read PVVLTIIISSLGLGTMMTFIG, HWLLVWMGLEINTLAIIPLMI, SALLLFASITNAWSLGEWSLL, ATLVTIALALKIGLAPMHFWL, VLQGLDLITGLILATWQKLAP, LNSNLLLFLGVSSTVIGGWGGLN, ILAYSSIAHLGWMITILHYSP, LNLALYIIMTLTTFLLFKLFN, LSIIALITLLSLGGLPPLSGF, DLAIPATIMALAALLSLFFYL, and LILMMATSLSILLLPLTPTIF.

This sequence belongs to the complex I subunit 2 family.

The protein resides in the mitochondrion inner membrane. It carries out the reaction a ubiquinone + NADH + 5 H(+)(in) = a ubiquinol + NAD(+) + 4 H(+)(out). In terms of biological role, core subunit of the mitochondrial membrane respiratory chain NADH dehydrogenase (Complex I) that is believed to belong to the minimal assembly required for catalysis. Complex I functions in the transfer of electrons from NADH to the respiratory chain. The immediate electron acceptor for the enzyme is believed to be ubiquinone. In Squalus acanthias (Spiny dogfish), this protein is NADH-ubiquinone oxidoreductase chain 2 (MT-ND2).